An 858-amino-acid polypeptide reads, in one-letter code: DNA mismatch repair protein MutS (858 aa).

609–616 (GPNMSGKS) is an ATP binding site.

The protein belongs to the DNA mismatch repair MutS family.

Its function is as follows. This protein is involved in the repair of mismatches in DNA. It is possible that it carries out the mismatch recognition step. This protein has a weak ATPase activity. In Enterococcus faecalis (strain ATCC 700802 / V583), this protein is DNA mismatch repair protein MutS.